We begin with the raw amino-acid sequence, 893 residues long: UPF0182 protein CLB_0018 (893 aa).

7 helical membrane passes run 9–29, 49–69, 94–114, 154–174, 202–222, 246–266, and 273–293; these read IPLF…NFII, AIII…WMYY, LFFI…SSSY, VIIS…FILE, LAIV…IKIW, FYKI…LSIV, and VSIC…ASFL.

It belongs to the UPF0182 family.

The protein resides in the cell membrane. This Clostridium botulinum (strain ATCC 19397 / Type A) protein is UPF0182 protein CLB_0018.